The chain runs to 255 residues: Small ribosomal subunit protein uS2 (255 aa).

The tract at residues 231 to 255 is disordered; the sequence is RLQTGAEEEFSTEGEEVVEETPAEA. Positions 236-255 are enriched in acidic residues; sequence AEEEFSTEGEEVVEETPAEA.

It belongs to the universal ribosomal protein uS2 family.

This is Small ribosomal subunit protein uS2 from Citrifermentans bemidjiense (strain ATCC BAA-1014 / DSM 16622 / JCM 12645 / Bem) (Geobacter bemidjiensis).